Reading from the N-terminus, the 270-residue chain is MAEAVGAVTLIAAPARRRWLWSALAAMLGLLTARISALEVHTPKEIFVVNGTQGKLTCTFDSPNTTGWLTTVSWSFQPEGTDSAVSFFHYSQGQVYIGDYPPFKDRVTWAGDLDKKDASINIENIQAVHNGTYICDVKNPPDIVVRPGQIRLHVVEIDNLLVFLVWVVVGTVTAVVLGLTLLISLVLVVLYRRKHSKRDYTGCSTSERLSPVKQAPRKCPSDTEGLVKSPPSAGSHQGPVIYAQLDHSGGHHSGKINKSESVVYADIRKD.

The N-terminal stretch at 1–35 is a signal peptide; the sequence is MAEAVGAVTLIAAPARRRWLWSALAAMLGLLTARI. Residues 36–151 enclose the Ig-like V-type domain; sequence SALEVHTPKE…DIVVRPGQIR (116 aa). Over 36–162 the chain is Extracellular; that stretch reads SALEVHTPKE…HVVEIDNLLV (127 aa). Residues Asn-50 and Asn-130 are each glycosylated (N-linked (GlcNAc...) asparagine). Residues Cys-58 and Cys-135 are joined by a disulfide bond. Residues 163–183 form a helical membrane-spanning segment; it reads FLVWVVVGTVTAVVLGLTLLI. Topologically, residues 184 to 270 are cytoplasmic; that stretch reads SLVLVVLYRR…SVVYADIRKD (87 aa). Positions 201–257 are disordered; that stretch reads TGCSTSERLSPVKQAPRKCPSDTEGLVKSPPSAGSHQGPVIYAQLDHSGGHHSGKIN. 4 positions are modified to phosphoserine: Ser-204, Ser-206, Ser-210, and Ser-221. The short motif at 240–245 is the ITIM motif 1 element; that stretch reads VIYAQL. Tyr-242 is modified (phosphotyrosine). Phosphoserine is present on Ser-261. The short motif at 262–267 is the ITIM motif 2 element; that stretch reads VVYADI. Phosphotyrosine is present on Tyr-264.

It belongs to the myelin P0 protein family. In terms of assembly, interacts with phosphorylated PTPN11/SHP-2. In terms of processing, phosphorylated on tyrosine residues upon stimulation with pervanadate and concanavalin-A (ConA). Phosphorylation at Tyr-242 and Tyr-264 is required for interaction with PTPN11/SHP-2. Dephosphorylated by PTPN11/SHP-2 (in vitro). Post-translationally, N-glycosylated.

It is found in the membrane. Its function is as follows. Cell surface receptor, which is involved in signal transduction processes. Recruits PTPN11/SHP-2 to the cell membrane and is a putative substrate of PTPN11/SHP-2. Is a major receptor for concanavalin-A (ConA) and is involved in cellular signaling induced by ConA, which probably includes Src family tyrosine-protein kinases. May be involved in regulation of integrin-mediated cell motility. This Rattus norvegicus (Rat) protein is Myelin protein zero-like protein 1 (Mpzl1).